The chain runs to 410 residues: Indoleamine 2,3-dioxygenase nanC (410 aa).

A heme-binding site is contributed by His309.

The protein belongs to the indoleamine 2,3-dioxygenase family. The cofactor is heme.

The catalysed reaction is D-tryptophan + O2 = N-formyl-D-kynurenine. The enzyme catalyses L-tryptophan + O2 = N-formyl-L-kynurenine. The protein operates within secondary metabolite biosynthesis. In terms of biological role, indoleamine 2,3-dioxygenase; part of the gene cluster that mediates the biosynthesis of the benzazepine alkaloid nanangelenin A which contains an unprecedented 3,4-dihydro-1-benzazepine-2,5-dione-N-prenyl-N-acetoxy-anthranilamide scaffold. The first step of nanangelenin biosynthesis is catalyzed by the indoleamine 2,3-dioxygenase nanC which produces N-formyl-kynurenine through the catabolism of tryptophan. The two-module NRPS nanA then utilizes anthranilate (Ant) and L-kynurenine (L-Kyn) to assemble the dipeptide product nanangelenin B. The first adenylation domain of nanA (A1) loads anthranilate onto the T1 domain, while A2 loads kynurenine, generated through spontaneous nonenzymatic deformylation of the nanC-supplied N-formyl-kynurenine. The peptide bond formation between the tethered amino acids is catalyzed by the first condensation domain (C1) between anthranilate's carbonyl carbon and kynurenine's aliphatic primary amine. The second C domain (C2) catalyzes the final cyclization event between the aromatic amine of kynurenine and the tethered carbonyl carbon, yielding nanangelenin B. The terminal T3 domain enhances the catalytic efficiency of C2, suggesting the T2-tethered Ant-L-Kyn is transferred to T3 prior to cyclization by C2. Once released from nanA, nanangelenin B is then prenylated by the prenyltransferase nanD to form nanangelenin C. Nanangelenin C is then N-hydroxylated by the FAD-dependent monooxygenase nanF and further acetylated by the acetyltransferase nanB to yield nanangelenin F. Finally, the N-methyltransferase nanE methylates the amide nitrogen of 1-benzazepine to convert nanangelenin F into nanangelenin A. NanE is also able to methylate most of the intermediates of the pathway such as nanangelenin B and nanangelenin C to produce nanangelenin D and nanangelenin E, respectively. The sequence is that of Indoleamine 2,3-dioxygenase nanC from Aspergillus nanangensis.